The primary structure comprises 178 residues: Peptidyl-prolyl cis-trans isomerase (178 aa).

Residues 1–17 (MKLLFFFLVLAVSAAVA) form the signal peptide. Positions 26-177 (FMDIEIDGES…KIAKITDIGL (152 aa)) constitute a PPIase cyclophilin-type domain.

It belongs to the cyclophilin-type PPIase family. PPIase A subfamily.

It carries out the reaction [protein]-peptidylproline (omega=180) = [protein]-peptidylproline (omega=0). In terms of biological role, PPIases accelerate the folding of proteins. It catalyzes the cis-trans isomerization of proline imidic peptide bonds in oligopeptides. Up-regulates interferon gamma production by bovine T-cells. Stimulates high levels of IFN-gamma production by peripheral blood mononuclear cells and T-cells. The IFN-gamma-inducing effect is blocked by cyclosporin A (CsA). The sequence is that of Peptidyl-prolyl cis-trans isomerase from Neospora caninum (Coccidian parasite).